The sequence spans 645 residues: Rab11 family-interacting protein 5 (645 aa).

One can recognise a C2 domain in the interval Met1 to Tyr146. Ser176, Ser283, Ser286, Ser307, Ser357, and Ser367 each carry phosphoserine. The disordered stretch occupies residues Gly271–Leu299. The span at Arg277 to Ser286 shows a compositional bias: polar residues. Positions Ser341–Arg550 are disordered. The span at Ser357 to Arg374 shows a compositional bias: low complexity. Basic and acidic residues predominate over residues Ser375–Trp387. Residues Ser391 and Ser395 each carry the phosphoserine modification. A compositionally biased stretch (basic residues) spans Arg452–Gly463. Phosphoserine occurs at positions 486, 530, 539, 545, and 640. Residues Lys578–Ser640 enclose the FIP-RBD domain.

Interacts with RAB11FIP4. Interacts with NAPG. Interacts with RO60. Interacts with RAB11A that has been activated by GTP binding. Post-translationally, phosphorylated on serine and threonine residues. Phosphorylation at Ser-357 is PKA-dependent.

The protein localises to the cytoplasm. It is found in the recycling endosome membrane. The protein resides in the early endosome membrane. It localises to the golgi apparatus membrane. Its subcellular location is the cytoplasmic vesicle. The protein localises to the secretory vesicle membrane. It is found in the mitochondrion membrane. Functionally, rab effector involved in protein trafficking from apical recycling endosomes to the apical plasma membrane. Involved in insulin granule exocytosis. May regulate V-ATPase intracellular transport in response to extracellular acidosis. This Mus musculus (Mouse) protein is Rab11 family-interacting protein 5.